Reading from the N-terminus, the 126-residue chain is Small ribosomal subunit protein uS11 (126 aa).

This sequence belongs to the universal ribosomal protein uS11 family. Part of the 30S ribosomal subunit.

Its function is as follows. Located on the platform of the 30S subunit. The sequence is that of Small ribosomal subunit protein uS11 from Methanosarcina barkeri (strain Fusaro / DSM 804).